A 223-amino-acid polypeptide reads, in one-letter code: MKTIQIAIDGPASSGKSTVAKIIAKDFGFTYLDTGAMYRAATYMALKNQLGVEEVEALLALLDQHPISFGRSETGDQLVFVGDVDITHPIRENEVTNHVSAIAAIPEVREKLVSLQQEIAQQGGIVMDGRDIGTVVLPQAELKIFLVASVDERAERRYKENIAKGIETDLETLKKEIAARDYKDSHRETSPLKQAEDAVYLDTTGLNIQEVVEKIKAEAEKRM.

Position 10-18 (10-18) interacts with ATP; that stretch reads GPASSGKST.

Belongs to the cytidylate kinase family. Type 1 subfamily.

It localises to the cytoplasm. The catalysed reaction is CMP + ATP = CDP + ADP. It catalyses the reaction dCMP + ATP = dCDP + ADP. The sequence is that of Cytidylate kinase from Streptococcus pneumoniae (strain Hungary19A-6).